A 489-amino-acid chain; its full sequence is WRKY transcription factor 72B (489 aa).

Disordered regions lie at residues 1 to 100 (MENK…EMRE), 131 to 159 (QKET…QEAD), and 234 to 267 (DENE…RARV). Composition is skewed to basic and acidic residues over residues 32 to 52 (GRKE…KDYM) and 83 to 100 (THKE…EMRE). Residues 84 to 132 (HKEQDDQLASAKDEMREVMEENQRLRMHLDRMMKEYRNLQNQFHDIVQK) adopt a coiled-coil conformation. The segment covering 138–147 (SSSTTVNTST) has biased composition (low complexity). Positions 273 to 339 (CDAPTMNDGC…YEGTHNHTLP (67 aa)) form a DNA-binding region, WRKY. Disordered regions lie at residues 356-381 (LLSG…PTTT) and 427-454 (TSTS…YNYN). 2 stretches are compositionally biased toward low complexity: residues 371–381 (TATTTTTPTTT) and 427–438 (TSTSSSSPSSLS).

Belongs to the WRKY group II-b family.

The protein resides in the nucleus. In association with WRKY72A, contributes to basal defense against root-knot nematodes (RKNs) and potato aphids, as well as Mi-1-mediated gene-for-gene resistance to these pests. Both WRKY72A and WRKY72B are not required for gene-for-gene resistance mediated by Pto, another tomato R gene. This chain is WRKY transcription factor 72B, found in Solanum lycopersicum (Tomato).